The following is a 364-amino-acid chain: Dihydroorotate dehydrogenase (quinone) (364 aa).

FMN-binding positions include 61 to 65 (AGYDK) and threonine 85. Position 65 (lysine 65) interacts with substrate. Residue 110-114 (NRLGF) coordinates substrate. 2 residues coordinate FMN: asparagine 139 and asparagine 170. Asparagine 170 contributes to the substrate binding site. Catalysis depends on serine 173, which acts as the Nucleophile. Asparagine 175 contributes to the substrate binding site. 2 residues coordinate FMN: lysine 215 and serine 243. 244 to 245 (NT) contacts substrate. Residues glycine 266, glycine 295, and 316 to 317 (YT) each bind FMN.

It belongs to the dihydroorotate dehydrogenase family. Type 2 subfamily. As to quaternary structure, monomer. The cofactor is FMN.

Its subcellular location is the cell membrane. The enzyme catalyses (S)-dihydroorotate + a quinone = orotate + a quinol. It functions in the pathway pyrimidine metabolism; UMP biosynthesis via de novo pathway; orotate from (S)-dihydroorotate (quinone route): step 1/1. Functionally, catalyzes the conversion of dihydroorotate to orotate with quinone as electron acceptor. The polypeptide is Dihydroorotate dehydrogenase (quinone) (Brucella abortus (strain S19)).